A 265-amino-acid chain; its full sequence is Glutamate racemase (265 aa).

Residues 9–10 (DS) and 41–42 (YG) each bind substrate. C73 acts as the Proton donor/acceptor in catalysis. Residue 74-75 (NT) coordinates substrate. The active-site Proton donor/acceptor is the C180. 181-182 (TH) contributes to the substrate binding site.

It belongs to the aspartate/glutamate racemases family.

It catalyses the reaction L-glutamate = D-glutamate. It participates in cell wall biogenesis; peptidoglycan biosynthesis. In terms of biological role, provides the (R)-glutamate required for cell wall biosynthesis. This is Glutamate racemase from Aliivibrio salmonicida (strain LFI1238) (Vibrio salmonicida (strain LFI1238)).